We begin with the raw amino-acid sequence, 180 residues long: ATP synthase subunit delta, chloroplastic (180 aa).

The protein belongs to the ATPase delta chain family. F-type ATPases have 2 components, F(1) - the catalytic core - and F(0) - the membrane proton channel. F(1) has five subunits: alpha(3), beta(3), gamma(1), delta(1), epsilon(1). CF(0) has four main subunits: a(1), b(1), b'(1) and c(10-14). The alpha and beta chains form an alternating ring which encloses part of the gamma chain. F(1) is attached to F(0) by a central stalk formed by the gamma and epsilon chains, while a peripheral stalk is formed by the delta, b and b' chains.

It localises to the plastid. The protein localises to the chloroplast thylakoid membrane. Functionally, f(1)F(0) ATP synthase produces ATP from ADP in the presence of a proton or sodium gradient. F-type ATPases consist of two structural domains, F(1) containing the extramembraneous catalytic core and F(0) containing the membrane proton channel, linked together by a central stalk and a peripheral stalk. During catalysis, ATP synthesis in the catalytic domain of F(1) is coupled via a rotary mechanism of the central stalk subunits to proton translocation. Its function is as follows. This protein is part of the stalk that links CF(0) to CF(1). It either transmits conformational changes from CF(0) to CF(1) or is implicated in proton conduction. The polypeptide is ATP synthase subunit delta, chloroplastic (Rhodomonas salina (Cryptomonas salina)).